The sequence spans 303 residues: Sulfotransferase 6B1 (303 aa).

65-70 (KCGSNW) is a binding site for 3'-phosphoadenylyl sulfate. The active-site Proton acceptor is H118. 3'-phosphoadenylyl sulfate contacts are provided by residues R140, S148, Y203, 237–242 (STFQAM), and 259–261 (RKG).

It belongs to the sulfotransferase 1 family.

Its subcellular location is the cytoplasm. The protein resides in the cytosol. It catalyses the reaction thyroxine + 3'-phosphoadenylyl sulfate = thyroxine sulfate + adenosine 3',5'-bisphosphate + H(+). Functionally, sulfotransferase that utilizes 3'-phospho-5'-adenylyl sulfate (PAPS) as sulfonate donor to catalyze the sulfate conjugation of thyroxine. Involved in the metabolism of thyroxine. In Pan troglodytes (Chimpanzee), this protein is Sulfotransferase 6B1 (SULT6B1).